The following is a 444-amino-acid chain: N-succinylarginine dihydrolase (444 aa).

Substrate contacts are provided by residues 19–28 (AGLSFGNVAS), Asn110, and 137–138 (HR). The active site involves Glu174. Arg214 is a substrate binding site. Residue His250 is part of the active site. Asp252 and Asn362 together coordinate substrate. The active-site Nucleophile is Cys368.

The protein belongs to the succinylarginine dihydrolase family. In terms of assembly, homodimer.

It carries out the reaction N(2)-succinyl-L-arginine + 2 H2O + 2 H(+) = N(2)-succinyl-L-ornithine + 2 NH4(+) + CO2. Its pathway is amino-acid degradation; L-arginine degradation via AST pathway; L-glutamate and succinate from L-arginine: step 2/5. Functionally, catalyzes the hydrolysis of N(2)-succinylarginine into N(2)-succinylornithine, ammonia and CO(2). This Shewanella amazonensis (strain ATCC BAA-1098 / SB2B) protein is N-succinylarginine dihydrolase.